The following is a 181-amino-acid chain: MFALREKYKNEIISQLKSELNMSNPMLLPKLEKIVISVGAGDYAKDSKIMQNIADTISLIAGQKAVITLAKKSVAGFKMREGMPMGVKVTLRGKMMYNFLEKLIVIALPRVKDFRGLKRNGFDGRGNYSFGLNEQLMFPEVVYDDIMVTHGMNITIVTSTHSDKEAFKLLELLGMPFAKGR.

This sequence belongs to the universal ribosomal protein uL5 family. Part of the 50S ribosomal subunit; part of the 5S rRNA/L5/L18/L25 subcomplex. Contacts the 5S rRNA and the P site tRNA. Forms a bridge to the 30S subunit in the 70S ribosome.

This is one of the proteins that bind and probably mediate the attachment of the 5S RNA into the large ribosomal subunit, where it forms part of the central protuberance. In the 70S ribosome it contacts protein S13 of the 30S subunit (bridge B1b), connecting the 2 subunits; this bridge is implicated in subunit movement. Contacts the P site tRNA; the 5S rRNA and some of its associated proteins might help stabilize positioning of ribosome-bound tRNAs. The polypeptide is Large ribosomal subunit protein uL5 (Helicobacter hepaticus (strain ATCC 51449 / 3B1)).